Consider the following 155-residue polypeptide: Small ribosomal subunit protein uS7c (155 aa).

It belongs to the universal ribosomal protein uS7 family. In terms of assembly, part of the 30S ribosomal subunit.

It is found in the plastid. It localises to the chloroplast. In terms of biological role, one of the primary rRNA binding proteins, it binds directly to 16S rRNA where it nucleates assembly of the head domain of the 30S subunit. This chain is Small ribosomal subunit protein uS7c (rps7), found in Gunnera chilensis (Chilean rhubarb).